The sequence spans 365 residues: Cytosolic 5'-nucleotidase 1A (365 aa).

The span at 1–11 (MEPGQPREARE) shows a compositional bias: basic and acidic residues. Residues 1-23 (MEPGQPREAREPGPGAETAAVPR) form a disordered region. The active-site Nucleophile is the aspartate 208.

It belongs to the 5'-nucleotidase type 3 family. The cofactor is Mg(2+).

The protein resides in the cytoplasm. It carries out the reaction a ribonucleoside 5'-phosphate + H2O = a ribonucleoside + phosphate. The catalysed reaction is a 2'-deoxyribonucleoside 5'-phosphate + H2O = a 2'-deoxyribonucleoside + phosphate. It catalyses the reaction IMP + H2O = inosine + phosphate. The enzyme catalyses AMP + H2O = adenosine + phosphate. It carries out the reaction dCMP + H2O = 2'-deoxycytidine + phosphate. Activated by ADP. In terms of biological role, catalyzes the hydrolysis of ribonucleotide and deoxyribonucleotide monophosphates, releasing inorganic phosphate and the corresponding nucleoside. AMP is the major substrate but can also hydrolyze dCMP and IMP. This chain is Cytosolic 5'-nucleotidase 1A (Nt5c1a), found in Mus musculus (Mouse).